A 231-amino-acid polypeptide reads, in one-letter code: Large ribosomal subunit protein uL1 (231 aa).

It belongs to the universal ribosomal protein uL1 family. In terms of assembly, part of the 50S ribosomal subunit.

Binds directly to 23S rRNA. The L1 stalk is quite mobile in the ribosome, and is involved in E site tRNA release. Functionally, protein L1 is also a translational repressor protein, it controls the translation of the L11 operon by binding to its mRNA. In Polaromonas sp. (strain JS666 / ATCC BAA-500), this protein is Large ribosomal subunit protein uL1.